The chain runs to 1020 residues: Sodium/potassium-transporting ATPase subunit alpha-2 (1020 aa).

Positions 1-5 are excised as a propeptide; it reads MGRGA. A disordered region spans residues 1–31; it reads MGRGAGREYSPAATTAENGGGKKKQKEKELD. Over 6 to 85 the chain is Cytoplasmic; sequence GREYSPAATT…NALTPPPTTP (80 aa). Phosphoserine is present on Ser-10. The interval 80–82 is interaction with phosphoinositide-3 kinase; sequence PPP. Residues 86-106 form a helical membrane-spanning segment; it reads EWVKFCRQLFGGFSILLWIGA. The Extracellular segment spans residues 107–129; it reads ILCFLAFGIQAAMEDEPSNDNLY. The chain crosses the membrane as a helical span at residues 130 to 150; that stretch reads LGVVLAAVVIVTGCFSYYQEA. At 151-286 the chain is on the cytoplasmic side; sequence KSSKIMDSFK…VGRTPIAMEI (136 aa). Polar residues predominate over residues 212 to 227; the sequence is DNSSLTGESEPQTRSP. Residues 212 to 231 form a disordered region; sequence DNSSLTGESEPQTRSPEFTH. The helical transmembrane segment at 287–306 threads the bilayer; the sequence is EHFIQLITGVAVFLGVSFFV. At 307–318 the chain is on the extracellular side; the sequence is LSLILGYSWLEA. The helical transmembrane segment at 319–336 threads the bilayer; sequence VIFLIGIIVANVPEGLLA. Topologically, residues 337 to 769 are cytoplasmic; it reads TVTVCLTLTA…EEGRLIFDNL (433 aa). Asp-374 acts as the 4-aspartylphosphate intermediate in catalysis. 4 positions are modified to phosphoserine: Ser-439, Ser-450, Ser-496, and Ser-559. Thr-570 carries the phosphothreonine modification. A phosphoserine mark is found at Ser-587 and Ser-672. Mg(2+)-binding residues include Asp-714 and Asp-718. Residues 770-789 form a helical membrane-spanning segment; the sequence is KKSIAYTLTSNIPEITPFLL. Over 790 to 799 the chain is Extracellular; the sequence is FIIANIPLPL. Residues 800–820 form a helical membrane-spanning segment; it reads GTVTILCIDLGTDMVPAISLA. The Cytoplasmic segment spans residues 821–840; it reads YEAAESDIMKRQPRNPQTDK. Position 826 is a phosphoserine (Ser-826). A helical transmembrane segment spans residues 841–863; sequence LVNERLISMAYGQIGMIQALGGF. The Extracellular segment spans residues 864 to 915; sequence FTYFVILAENGFLPSRLLGIRLDWDDRSMNDLEDSYGQEWTYEQRKVVEFTC. A helical membrane pass occupies residues 916 to 935; that stretch reads HTAFFASIVVVQWADLIICK. Topologically, residues 936 to 948 are cytoplasmic; the sequence is TRRNSVFQQGMKN. Ser-940 carries the phosphoserine; by PKA modification. Residues 949-967 form a helical membrane-spanning segment; sequence KILIFGLLEETALAAFLSY. The Extracellular segment spans residues 968-982; sequence CPGMGVALRMYPLKV. Residues 983 to 1003 traverse the membrane as a helical segment; that stretch reads TWWFCAFPYSLLIFIYDEVRK. Residues 1004–1020 lie on the Cytoplasmic side of the membrane; it reads LILRRYPGGWVEKETYY.

The protein belongs to the cation transport ATPase (P-type) (TC 3.A.3) family. Type IIC subfamily. As to quaternary structure, the sodium/potassium-transporting ATPase is composed of a catalytic alpha subunit, an auxiliary non-catalytic beta subunit and an additional regulatory subunit. Interacts with regulatory subunit FXYD1.

The protein localises to the membrane. It localises to the cell membrane. The enzyme catalyses K(+)(out) + Na(+)(in) + ATP + H2O = K(+)(in) + Na(+)(out) + ADP + phosphate + H(+). Its function is as follows. This is the catalytic component of the active enzyme, which catalyzes the hydrolysis of ATP coupled with the exchange of sodium and potassium ions across the plasma membrane. This action creates the electrochemical gradient of sodium and potassium, providing the energy for active transport of various nutrients. This chain is Sodium/potassium-transporting ATPase subunit alpha-2 (ATP1A2), found in Bos taurus (Bovine).